The primary structure comprises 332 residues: Holliday junction branch migration complex subunit RuvB (332 aa).

A large ATPase domain (RuvB-L) region spans residues 1–181 (MARILDNNVM…FGITGHMEYY (181 aa)). Residues leucine 20, arginine 21, glycine 62, lysine 65, threonine 66, threonine 67, 128-130 (EDF), arginine 171, tyrosine 181, and arginine 218 each bind ATP. Threonine 66 contacts Mg(2+). Residues 182 to 252 (QEKDLTEIVE…ITDRALTMLD (71 aa)) form a small ATPAse domain (RuvB-S) region. Residues 255–332 (REGLNYIDQK…RHLGYPYQNT (78 aa)) are head domain (RuvB-H). Residues arginine 291, arginine 310, arginine 312, and arginine 315 each contribute to the DNA site.

It belongs to the RuvB family. Homohexamer. Forms an RuvA(8)-RuvB(12)-Holliday junction (HJ) complex. HJ DNA is sandwiched between 2 RuvA tetramers; dsDNA enters through RuvA and exits via RuvB. An RuvB hexamer assembles on each DNA strand where it exits the tetramer. Each RuvB hexamer is contacted by two RuvA subunits (via domain III) on 2 adjacent RuvB subunits; this complex drives branch migration. In the full resolvosome a probable DNA-RuvA(4)-RuvB(12)-RuvC(2) complex forms which resolves the HJ.

The protein localises to the cytoplasm. It catalyses the reaction ATP + H2O = ADP + phosphate + H(+). Its function is as follows. The RuvA-RuvB-RuvC complex processes Holliday junction (HJ) DNA during genetic recombination and DNA repair, while the RuvA-RuvB complex plays an important role in the rescue of blocked DNA replication forks via replication fork reversal (RFR). RuvA specifically binds to HJ cruciform DNA, conferring on it an open structure. The RuvB hexamer acts as an ATP-dependent pump, pulling dsDNA into and through the RuvAB complex. RuvB forms 2 homohexamers on either side of HJ DNA bound by 1 or 2 RuvA tetramers; 4 subunits per hexamer contact DNA at a time. Coordinated motions by a converter formed by DNA-disengaged RuvB subunits stimulates ATP hydrolysis and nucleotide exchange. Immobilization of the converter enables RuvB to convert the ATP-contained energy into a lever motion, pulling 2 nucleotides of DNA out of the RuvA tetramer per ATP hydrolyzed, thus driving DNA branch migration. The RuvB motors rotate together with the DNA substrate, which together with the progressing nucleotide cycle form the mechanistic basis for DNA recombination by continuous HJ branch migration. Branch migration allows RuvC to scan DNA until it finds its consensus sequence, where it cleaves and resolves cruciform DNA. This Streptococcus pyogenes serotype M18 (strain MGAS8232) protein is Holliday junction branch migration complex subunit RuvB.